Consider the following 333-residue polypeptide: Glycerol-3-phosphate dehydrogenase [NAD(P)+] (333 aa).

Trp-13, Lys-33, and Lys-108 together coordinate NADPH. Positions 108 and 138 each coordinate sn-glycerol 3-phosphate. Ser-142 contributes to the NADPH binding site. Lys-193, Asp-246, Ser-256, Arg-257, and Asn-258 together coordinate sn-glycerol 3-phosphate. The Proton acceptor role is filled by Lys-193. Arg-257 contributes to the NADPH binding site. Residues Val-281 and Glu-283 each contribute to the NADPH site.

It belongs to the NAD-dependent glycerol-3-phosphate dehydrogenase family.

The protein resides in the cytoplasm. The enzyme catalyses sn-glycerol 3-phosphate + NAD(+) = dihydroxyacetone phosphate + NADH + H(+). The catalysed reaction is sn-glycerol 3-phosphate + NADP(+) = dihydroxyacetone phosphate + NADPH + H(+). The protein operates within membrane lipid metabolism; glycerophospholipid metabolism. Functionally, catalyzes the reduction of the glycolytic intermediate dihydroxyacetone phosphate (DHAP) to sn-glycerol 3-phosphate (G3P), the key precursor for phospholipid synthesis. This is Glycerol-3-phosphate dehydrogenase [NAD(P)+] from Bifidobacterium longum (strain NCC 2705).